An 88-amino-acid chain; its full sequence is Cytochrome c oxidase subunit 6B2 (88 aa).

Residues 1–22 are disordered; the sequence is MLDVEAQEPPKGKWSTPPFDPR. A CHCH domain is found at 29–75; sequence IRNCYQNFLDYHRCLKTRTRRGKSTQPCEYYFRVYHSLCPISWVESW. A Cx9C motif motif is present at residues 32 to 42; that stretch reads CYQNFLDYHRC. 2 cysteine pairs are disulfide-bonded: cysteine 32–cysteine 67 and cysteine 42–cysteine 56. Residues 56-67 carry the Cx10C motif motif; that stretch reads CEYYFRVYHSLC.

This sequence belongs to the cytochrome c oxidase subunit 6B family. In terms of assembly, component of the cytochrome c oxidase (complex IV, CIV), a multisubunit enzyme composed of 14 subunits. The complex is composed of a catalytic core of 3 subunits MT-CO1, MT-CO2 and MT-CO3, encoded in the mitochondrial DNA, and 11 supernumerary subunits COX4I1 (or COX4I2), COX5A, COX5B, COX6A1 (or COX6A2), COX6B1 (or COX6B2), COX6C, COX7A2 (or COX7A1), COX7B, COX7C, COX8A and NDUFA4, which are encoded in the nuclear genome. The complex exists as a monomer or a dimer and forms supercomplexes (SCs) in the inner mitochondrial membrane with NADH-ubiquinone oxidoreductase (complex I, CI) and ubiquinol-cytochrome c oxidoreductase (cytochrome b-c1 complex, complex III, CIII), resulting in different assemblies (supercomplex SCI(1)III(2)IV(1) and megacomplex MCI(2)III(2)IV(2)). Testis specific. Weak expression in thymus and heart. Expressed in cancer cell lines.

The protein localises to the mitochondrion inner membrane. It functions in the pathway energy metabolism; oxidative phosphorylation. Component of the cytochrome c oxidase, the last enzyme in the mitochondrial electron transport chain which drives oxidative phosphorylation. The respiratory chain contains 3 multisubunit complexes succinate dehydrogenase (complex II, CII), ubiquinol-cytochrome c oxidoreductase (cytochrome b-c1 complex, complex III, CIII) and cytochrome c oxidase (complex IV, CIV), that cooperate to transfer electrons derived from NADH and succinate to molecular oxygen, creating an electrochemical gradient over the inner membrane that drives transmembrane transport and the ATP synthase. Cytochrome c oxidase is the component of the respiratory chain that catalyzes the reduction of oxygen to water. Electrons originating from reduced cytochrome c in the intermembrane space (IMS) are transferred via the dinuclear copper A center (CU(A)) of subunit 2 and heme A of subunit 1 to the active site in subunit 1, a binuclear center (BNC) formed by heme A3 and copper B (CU(B)). The BNC reduces molecular oxygen to 2 water molecules using 4 electrons from cytochrome c in the IMS and 4 protons from the mitochondrial matrix. The chain is Cytochrome c oxidase subunit 6B2 (COX6B2) from Homo sapiens (Human).